The sequence spans 112 residues: Class I hydrophobin 7 (112 aa).

The first 23 residues, 1–23, serve as a signal peptide directing secretion; the sequence is MFARQATSVSAFLVLTLSLFAAA. Cystine bridges form between Cys-36–Cys-93, Cys-43–Cys-87, Cys-44–Cys-74, and Cys-94–Cys-107. Asn-96 carries N-linked (GlcNAc...) asparagine glycosylation.

Belongs to the fungal hydrophobin family. Self-assembles to form functional amyloid fibrils called rodlets. Self-assembly into fibrillar rodlets occurs spontaneously at hydrophobic:hydrophilic interfaces and the rodlets further associate laterally to form amphipathic monolayers.

The protein resides in the secreted. The protein localises to the cell wall. Aerial growth, conidiation, and dispersal of filamentous fungi in the environment rely upon a capability of their secreting small amphipathic proteins called hydrophobins (HPBs) with low sequence identity. Class I can self-assemble into an outermost layer of rodlet bundles on aerial cell surfaces, conferring cellular hydrophobicity that supports fungal growth, development and dispersal; whereas Class II form highly ordered films at water-air interfaces through intermolecular interactions but contribute nothing to the rodlet structure. The chain is Class I hydrophobin 7 from Flammulina velutipes (Agaricus velutipes).